Consider the following 204-residue polypeptide: Urease accessory protein UreG (204 aa).

Position 12–19 (12–19 (GPVGSGKT)) interacts with GTP.

This sequence belongs to the SIMIBI class G3E GTPase family. UreG subfamily. As to quaternary structure, homodimer. UreD, UreF and UreG form a complex that acts as a GTP-hydrolysis-dependent molecular chaperone, activating the urease apoprotein by helping to assemble the nickel containing metallocenter of UreC. The UreE protein probably delivers the nickel.

The protein localises to the cytoplasm. Functionally, facilitates the functional incorporation of the urease nickel metallocenter. This process requires GTP hydrolysis, probably effectuated by UreG. The polypeptide is Urease accessory protein UreG (Pseudomonas paraeruginosa (strain DSM 24068 / PA7) (Pseudomonas aeruginosa (strain PA7))).